Reading from the N-terminus, the 549-residue chain is E-selectin (549 aa).

Residues Met-1–Ala-21 form the signal peptide. Positions Trp-22–Tyr-139 constitute a C-type lectin domain. Topologically, residues Trp-22–Pro-494 are extracellular. 2 N-linked (GlcNAc...) asparagine glycosylation sites follow: Asn-25 and Asn-60. Disulfide bonds link Cys-40-Cys-138, Cys-111-Cys-130, Cys-143-Cys-154, Cys-148-Cys-163, Cys-165-Cys-174, Cys-180-Cys-225, Cys-193-Cys-206, Cys-210-Cys-238, Cys-243-Cys-287, Cys-256-Cys-269, Cys-273-Cys-300, Cys-305-Cys-350, Cys-336-Cys-363, Cys-368-Cys-413, Cys-399-Cys-426, Cys-431-Cys-472, and Cys-458-Cys-485. Glu-101, Asn-103, and Glu-109 together coordinate Ca(2+). A carbohydrate is bound by residues Glu-101–Glu-109, Glu-113–Arg-118, and Asn-126–Glu-128. 2 residues coordinate Ca(2+): Asn-126 and Asp-127. The EGF-like domain maps to Thr-140–Asp-175. Asn-145 carries an N-linked (GlcNAc...) asparagine glycan. Sushi domains lie at Val-178 to Val-240, Val-241 to Ala-302, Val-303 to Ala-365, Ser-366 to Gly-428, and Val-429 to Ala-487. 2 N-linked (GlcNAc...) asparagine glycosylation sites follow: Asn-192 and Asn-203. Asn-266 carries N-linked (GlcNAc...) asparagine glycosylation. Asn-313, Asn-320, and Asn-333 each carry an N-linked (GlcNAc...) asparagine glycan. Asn-441 and Asn-465 each carry an N-linked (GlcNAc...) asparagine glycan. A helical membrane pass occupies residues Leu-495–Leu-516. Residues Lys-517–Ile-549 lie on the Cytoplasmic side of the membrane.

It belongs to the selectin/LECAM family. As to quaternary structure, interacts with SELPLG/PSGL1 and PODXL2 through the sialyl Lewis X epitope. SELPLG sulfation appears not to be required for this interaction.

It is found in the cell membrane. In terms of biological role, cell-surface glycoprotein having a role in immunoadhesion. Mediates in the adhesion of blood neutrophils in cytokine-activated endothelium through interaction with SELPLG/PSGL1. May have a role in capillary morphogenesis. This is E-selectin (Sele) from Rattus norvegicus (Rat).